Consider the following 198-residue polypeptide: Glycerol-3-phosphate acyltransferase (198 aa).

6 helical membrane passes run 1–21 (MNLL…GYLA), 53–73 (IIVF…AKYL), 79–99 (WQVA…WLNW), 111–131 (IFLG…IIMI), 136–156 (IVSL…FLSF), and 158–178 (GSNI…LVIW).

The protein belongs to the PlsY family. In terms of assembly, probably interacts with PlsX.

The protein localises to the cell inner membrane. The catalysed reaction is an acyl phosphate + sn-glycerol 3-phosphate = a 1-acyl-sn-glycero-3-phosphate + phosphate. Its pathway is lipid metabolism; phospholipid metabolism. In terms of biological role, catalyzes the transfer of an acyl group from acyl-phosphate (acyl-PO(4)) to glycerol-3-phosphate (G3P) to form lysophosphatidic acid (LPA). This enzyme utilizes acyl-phosphate as fatty acyl donor, but not acyl-CoA or acyl-ACP. This is Glycerol-3-phosphate acyltransferase from Prochlorococcus marinus (strain NATL1A).